The primary structure comprises 200 residues: Small ribosomal subunit protein uS5 (200 aa).

Residues 1-12 (MGRPRTSQTRGQ) show a composition bias toward polar residues. Residues 1 to 49 (MGRPRTSQTRGQGPSGATGGNPRGGGSTTRERDARGARPGERDGGSEIQ) form a disordered region. A compositionally biased stretch (gly residues) spans 13-27 (GPSGATGGNPRGGGS). Residues 29 to 49 (TRERDARGARPGERDGGSEIQ) show a composition bias toward basic and acidic residues. The region spanning 48–111 (IQDRVVQIRR…EKARHAMFDV (64 aa)) is the S5 DRBM domain.

It belongs to the universal ribosomal protein uS5 family. As to quaternary structure, part of the 30S ribosomal subunit. Contacts proteins S4 and S8.

In terms of biological role, with S4 and S12 plays an important role in translational accuracy. Located at the back of the 30S subunit body where it stabilizes the conformation of the head with respect to the body. This chain is Small ribosomal subunit protein uS5, found in Rubrobacter xylanophilus (strain DSM 9941 / JCM 11954 / NBRC 16129 / PRD-1).